The sequence spans 586 residues: MWPNLFWGFDAYDGSNFNAFPIYFPTEFMQTEPRDQSSCQQLSMEQATEPSMNPDQEDIVEGGENYGELSNQQETVPSFENADQNLSRLEMSTLARELKEKVKQSRALRQSVNNAAEQQPSTKPQPVQQEVQDLINDILKSQDQDDNLKNPSKLTGPQDDTETEKPASTLPTTPRTIKESPLSTYSIPVYCPASPEGRTHIPDEILDNAPKGPRHTHRGQVQMFCNGECGRRETDKAMPAIEPSDKTEETEGATAVRIPPVATDGDLEQDVIMWLRHTGFYDKAKRTDALARWKQLAKMEQGLARPQQDHQEAGVALASASQGSKEAGMGTRPGPDADCPPVCRPEQGGPGSSQAALSCKSKQSTDIQRATLAETRGGSLRDRAANQQPSKKSDRGRCARRHRSSSPRGRSGSHKSRRATTDSPVSRSTTKSTPSRARQPGHRDYREYRDDRNRDTKPRSPLVSCRAAVAFNPGVKGAPLVRQRFRPRQTNTDLQHKARIVGAPPRDMESNIKERQNHDPERQSGQFGIRWLCTSPLALQNTKSLRNSFDDLKPVLLGRDGQEMDDYCGRDLLRLMDASERGLHRP.

Disordered stretches follow at residues 98–128 (LKEKVKQSRALRQSVNNAAEQQPSTKPQPVQ), 141–181 (SQDQ…KESP), and 301–464 (QGLA…PLVS). 3 stretches are compositionally biased toward polar residues: residues 107 to 128 (ALRQSVNNAAEQQPSTKPQPVQ), 169 to 181 (TLPTTPRTIKESP), and 352 to 368 (SSQAALSCKSKQSTDIQ). Over residues 398 to 418 (CARRHRSSSPRGRSGSHKSRR) the composition is skewed to basic residues. Residues 421–436 (TDSPVSRSTTKSTPSR) show a composition bias toward polar residues. A YTH domain is found at 435–576 (SRARQPGHRD…YCGRDLLRLM (142 aa)). The span at 441-458 (GHRDYREYRDDRNRDTKP) shows a compositional bias: basic and acidic residues.

This sequence belongs to the YTHDF family. YTHDF1 subfamily.

Its function is as follows. Specifically recognizes and binds N6-methyladenosine (m6A)-containing mRNAs, and regulates their stability. M6A is a modification present at internal sites of mRNAs and some non-coding RNAs and plays a role in mRNA stability and processing. Plays a role in pathogenicity towards plant host. This chain is YTH domain-containing family protein 2, found in Pyricularia oryzae (strain 70-15 / ATCC MYA-4617 / FGSC 8958) (Rice blast fungus).